The primary structure comprises 150 residues: MRCVVYSIAKSSPLELVKIYQKQCRQFDCELELVDLFPKNTANAQKVSKKLAQKSYSLAFEPYLNPKAKNIALHPKAQRGDSFAFSKMLENHLNINFFIAGAYGFEENFLKDCQAWSLSEMTFSHEVAKIVLCEQIYRALSIIFKHPYHK.

Residues A100 and L118–F123 each bind S-adenosyl-L-methionine.

Belongs to the RNA methyltransferase RlmH family. As to quaternary structure, homodimer.

The protein resides in the cytoplasm. The catalysed reaction is pseudouridine(1915) in 23S rRNA + S-adenosyl-L-methionine = N(3)-methylpseudouridine(1915) in 23S rRNA + S-adenosyl-L-homocysteine + H(+). Specifically methylates the pseudouridine at position 1915 (m3Psi1915) in 23S rRNA. The protein is Ribosomal RNA large subunit methyltransferase H of Helicobacter pylori (strain ATCC 700392 / 26695) (Campylobacter pylori).